Consider the following 338-residue polypeptide: POU domain, class 4, transcription factor 3 (338 aa).

The short motif at 56-65 (RAEALAAVDI) is the POU-IV box element. Positions 179-256 (DVESDPRELE…VLQAWLEEAE (78 aa)) constitute a POU-specific domain. Positions 274–333 (RKRKRTSIAAPEKRSLEAYFAIQPRPSSEKIAAIAEKLDLKKNVVRVWFCNQRQKQKRMK) form a DNA-binding region, homeobox.

The protein belongs to the POU transcription factor family. Class-4 subfamily. In terms of assembly, interacts with ISL1. Brain.

Its subcellular location is the nucleus. The protein resides in the cytoplasm. Its function is as follows. Acts as a transcriptional activator. Acts by binding to sequences related to the consensus octamer motif 5'-ATGCAAAT-3' in the regulatory regions of its target genes. Involved in the auditory system development, required for terminal differentiation of hair cells in the inner ear. The sequence is that of POU domain, class 4, transcription factor 3 from Mus musculus (Mouse).